The following is a 291-amino-acid chain: ATP synthase gamma chain (291 aa).

The protein belongs to the ATPase gamma chain family. F-type ATPases have 2 components, CF(1) - the catalytic core - and CF(0) - the membrane proton channel. CF(1) has five subunits: alpha(3), beta(3), gamma(1), delta(1), epsilon(1). CF(0) has three main subunits: a, b and c.

The protein resides in the cell inner membrane. Produces ATP from ADP in the presence of a proton gradient across the membrane. The gamma chain is believed to be important in regulating ATPase activity and the flow of protons through the CF(0) complex. This Burkholderia lata (strain ATCC 17760 / DSM 23089 / LMG 22485 / NCIMB 9086 / R18194 / 383) protein is ATP synthase gamma chain.